The following is a 238-amino-acid chain: Probable transcriptional regulatory protein VPA0011 (238 aa).

The protein belongs to the TACO1 family.

It localises to the cytoplasm. In Vibrio parahaemolyticus serotype O3:K6 (strain RIMD 2210633), this protein is Probable transcriptional regulatory protein VPA0011.